A 285-amino-acid chain; its full sequence is Type II secretion system protein C (285 aa).

Residues 1 to 27 lie on the Cytoplasmic side of the membrane; the sequence is MARLQAFKDPSFHSLVATFRSLPLIRR. A helical transmembrane segment spans residues 28 to 48; the sequence is FVLGLILLLICQQLAVLTWRF. The Periplasmic portion of the chain corresponds to 49 to 285; the sequence is LLPEDSRIVG…DIYLALDGDH (237 aa).

The protein belongs to the GSP C family.

The protein localises to the cell inner membrane. In terms of biological role, involved in a type II secretion system (T2SS, formerly general secretion pathway, GSP) for the export of proteins. Required for the translocation of the multiple pectic enzymes. This is Type II secretion system protein C (outC) from Pectobacterium carotovorum subsp. carotovorum (Erwinia carotovora subsp. carotovora).